A 255-amino-acid polypeptide reads, in one-letter code: F-box only protein 44 (255 aa).

One can recognise an F-box domain in the interval valine 3–lysine 50. Positions phenylalanine 71 to proline 252 constitute an FBA domain.

In terms of assembly, part of a SCF (SKP1-cullin-F-box) protein ligase complex. Interacts with SKP1 and CUL1. In terms of tissue distribution, expressed in brain, liver, pancreas and adipose tissue (at protein level). Widely expressed.

Functionally, substrate-recognition component of the SCF (SKP1-CUL1-F-box protein)-type E3 ubiquitin ligase complex. The chain is F-box only protein 44 (Fbxo44) from Mus musculus (Mouse).